The chain runs to 257 residues: Pyridoxine 5'-phosphate synthase (257 aa).

Asn-12 lines the 3-amino-2-oxopropyl phosphate pocket. 14-15 is a binding site for 1-deoxy-D-xylulose 5-phosphate; the sequence is DH. Arg-23 lines the 3-amino-2-oxopropyl phosphate pocket. The active-site Proton acceptor is His-48. 1-deoxy-D-xylulose 5-phosphate-binding residues include Arg-50 and His-55. Catalysis depends on Glu-75, which acts as the Proton acceptor. Thr-105 serves as a coordination point for 1-deoxy-D-xylulose 5-phosphate. His-199 acts as the Proton donor in catalysis. 3-amino-2-oxopropyl phosphate is bound by residues Gly-200 and 221–222; that span reads GH.

It belongs to the PNP synthase family. As to quaternary structure, homooctamer; tetramer of dimers.

It localises to the cytoplasm. It catalyses the reaction 3-amino-2-oxopropyl phosphate + 1-deoxy-D-xylulose 5-phosphate = pyridoxine 5'-phosphate + phosphate + 2 H2O + H(+). It participates in cofactor biosynthesis; pyridoxine 5'-phosphate biosynthesis; pyridoxine 5'-phosphate from D-erythrose 4-phosphate: step 5/5. Functionally, catalyzes the complicated ring closure reaction between the two acyclic compounds 1-deoxy-D-xylulose-5-phosphate (DXP) and 3-amino-2-oxopropyl phosphate (1-amino-acetone-3-phosphate or AAP) to form pyridoxine 5'-phosphate (PNP) and inorganic phosphate. This Xanthobacter autotrophicus (strain ATCC BAA-1158 / Py2) protein is Pyridoxine 5'-phosphate synthase.